The chain runs to 308 residues: Cytochrome b (308 aa).

4 helical membrane-spanning segments follow: residues 1–21 (FGSLLGICLLTQIITGLLLAM), 45–66 (WLIRNLHANGASFFFICIYFHI), 81–101 (WNIGVILLLTLMATAFVGYVL), and 146–166 (FFALHFLLPFVIAGLTLVHLT). 2 residues coordinate heme b: His-51 and His-65. Residues His-150 and His-164 each coordinate heme b. His-169 contributes to the a ubiquinone binding site. 3 helical membrane-spanning segments follow: residues 194–214 (TKDILGFALMFILLVSLALFS), 256–276 (LGGVLALAASVLVLFLLPLLH), and 288–308 (LSQILFWALVANLLILTWVGS).

This sequence belongs to the cytochrome b family. In terms of assembly, the cytochrome bc1 complex contains 11 subunits: 3 respiratory subunits (MT-CYB, CYC1 and UQCRFS1), 2 core proteins (UQCRC1 and UQCRC2) and 6 low-molecular weight proteins (UQCRH/QCR6, UQCRB/QCR7, UQCRQ/QCR8, UQCR10/QCR9, UQCR11/QCR10 and a cleavage product of UQCRFS1). This cytochrome bc1 complex then forms a dimer. Heme b serves as cofactor.

The protein localises to the mitochondrion inner membrane. In terms of biological role, component of the ubiquinol-cytochrome c reductase complex (complex III or cytochrome b-c1 complex) that is part of the mitochondrial respiratory chain. The b-c1 complex mediates electron transfer from ubiquinol to cytochrome c. Contributes to the generation of a proton gradient across the mitochondrial membrane that is then used for ATP synthesis. In Baeolophus inornatus (Oak titmouse), this protein is Cytochrome b (MT-CYB).